A 260-amino-acid chain; its full sequence is MLKSYRAVLVSLSLLLVFVLSGCSNATPIDAHSTGIWDHYFVYPISFMIQFVAHHIPGASFGIAIIIMTLVIRSAMIPLAVSQYRSQAKMKKMQPELQKLKQKYGDVSKDLEKQKQYQKEMSELMKSGGWNPLAGCWPLLIQMPIFSALYYAISRTEEIRTSTFLWVNLGHADPYHILPIIAALTTFIQMKVFQSNSTSGEQVQMLKMQQIMMPAMILFMGFAAPSGLVLYWITGNLFTMMQTIVLRKIMEREELQLQKA.

An N-terminal signal peptide occupies residues 1–22 (MLKSYRAVLVSLSLLLVFVLSG). Cys-23 carries the N-palmitoyl cysteine lipid modification. The S-diacylglycerol cysteine moiety is linked to residue Cys-23. 5 helical membrane passes run 29–49 (IDAH…SFMI), 52–72 (VAHH…TLVI), 133–153 (LAGC…YYAI), 164–184 (FLWV…IAAL), and 213–233 (MPAM…LYWI).

This sequence belongs to the OXA1/ALB3/YidC family. Type 2 subfamily.

It is found in the cell membrane. In terms of biological role, required for the insertion and/or proper folding and/or complex formation of integral membrane proteins into the membrane. Involved in integration of membrane proteins that insert both dependently and independently of the Sec translocase complex, as well as at least some lipoproteins. This is Membrane protein insertase YidC 1 from Bacillus anthracis.